Here is a 240-residue protein sequence, read N- to C-terminus: Lactate utilization protein C (240 aa).

It belongs to the LutC/YkgG family.

Is involved in L-lactate degradation and allows cells to grow with lactate as the sole carbon source. In Geobacillus kaustophilus (strain HTA426), this protein is Lactate utilization protein C.